We begin with the raw amino-acid sequence, 156 residues long: Protein-export protein SecB (156 aa).

Belongs to the SecB family. As to quaternary structure, homotetramer, a dimer of dimers. One homotetramer interacts with 1 SecA dimer.

The protein localises to the cytoplasm. Its function is as follows. One of the proteins required for the normal export of preproteins out of the cell cytoplasm. It is a molecular chaperone that binds to a subset of precursor proteins, maintaining them in a translocation-competent state. It also specifically binds to its receptor SecA. This chain is Protein-export protein SecB, found in Pectobacterium carotovorum subsp. carotovorum (strain PC1).